Reading from the N-terminus, the 696-residue chain is Two-component response regulator ORR22 (696 aa).

Positions 27–142 constitute a Response regulatory domain; sequence RVLAVDDDPV…ELRNIWQHVV (116 aa). 4-aspartylphosphate is present on D78. The tract at residues 154–214 is disordered; it reads LDFSKECNKP…DYQENDEPSA (61 aa). Polar residues predominate over residues 176–185; sequence TCGSSDQNGR. The span at 195-211 shows a compositional bias: acidic residues; the sequence is GEDDDEGDDNDYQENDE. The segment at residues 214–273 is a DNA-binding region (myb-like GARP); the sequence is AAKKPRVVWSVELHRKFVAAVNQLGIDKAVPKRILELMNVEKLTRENVASHLQKYRLYLK.

Belongs to the ARR family. Type-B subfamily. Two-component system major event consists of a His-to-Asp phosphorelay between a sensor histidine kinase (HK) and a response regulator (RR). In plants, the His-to-Asp phosphorelay involves an additional intermediate named Histidine-containing phosphotransfer protein (HPt). This multistep phosphorelay consists of a His-Asp-His-Asp sequential transfer of a phosphate group between first a His and an Asp of the HK protein, followed by the transfer to a conserved His of the HPt protein and finally the transfer to an Asp in the receiver domain of the RR protein.

Its subcellular location is the nucleus. Its function is as follows. Transcriptional activator that binds specific DNA sequence. Functions as a response regulator involved in His-to-Asp phosphorelay signal transduction system. Phosphorylation of the Asp residue in the receiver domain activates the ability of the protein to promote the transcription of target genes. May directly activate some type-A response regulators in response to cytokinins. Functions as a response regulator in response to cytokinins. In Oryza sativa subsp. japonica (Rice), this protein is Two-component response regulator ORR22.